We begin with the raw amino-acid sequence, 232 residues long: Large ribosomal subunit protein uL1 (232 aa).

The protein belongs to the universal ribosomal protein uL1 family. As to quaternary structure, part of the 50S ribosomal subunit.

In terms of biological role, binds directly to 23S rRNA. The L1 stalk is quite mobile in the ribosome, and is involved in E site tRNA release. Its function is as follows. Protein L1 is also a translational repressor protein, it controls the translation of the L11 operon by binding to its mRNA. In Christiangramia forsetii (strain DSM 17595 / CGMCC 1.15422 / KT0803) (Gramella forsetii), this protein is Large ribosomal subunit protein uL1.